The chain runs to 361 residues: Divinyl chlorophyll a/b light-harvesting protein PcbD (361 aa).

6 consecutive transmembrane segments (helical) span residues 27–47 (FIAS…GSTL), 93–113 (IVHL…GILF), 140–160 (FILG…VEWA), 201–221 (VMGG…FHIV), 248–268 (AVLS…AFWC), and 315–335 (LTNV…WHAL).

The protein belongs to the PsbB/PsbC family. IsiA/Pcb subfamily. In terms of assembly, the antenna complex consists of divinyl chlorophylls (a and b) and divinyl chlorophyll a/b binding proteins and binds more divinyl chlorophyll b than does the antenna complex from high-light-adapted Prochlorococcus. The cofactor is divinyl chlorophyll a. It depends on divinyl chlorophyll b as a cofactor.

The protein resides in the cellular thylakoid membrane. Its function is as follows. The antenna complex functions as a light receptor, it captures and delivers excitation energy to photosystems II and I. The Prochlorales pcb genes are not related to higher plant LHCs. The protein is Divinyl chlorophyll a/b light-harvesting protein PcbD (pcbD) of Prochlorococcus marinus (strain SARG / CCMP1375 / SS120).